The chain runs to 187 residues: Acireductone dioxygenase (187 aa).

Fe(2+)-binding residues include His-87, His-89, Glu-93, and His-136. The Ni(2+) site is built by His-87, His-89, Glu-93, and His-136.

It belongs to the acireductone dioxygenase (ARD) family. It depends on Fe(2+) as a cofactor. The cofactor is Ni(2+).

It localises to the cytoplasm. The protein resides in the nucleus. It carries out the reaction 1,2-dihydroxy-5-(methylsulfanyl)pent-1-en-3-one + O2 = 4-methylsulfanyl-2-oxobutanoate + formate + 2 H(+). The catalysed reaction is 1,2-dihydroxy-5-(methylsulfanyl)pent-1-en-3-one + O2 = 3-(methylsulfanyl)propanoate + CO + formate + 2 H(+). It functions in the pathway amino-acid biosynthesis; L-methionine biosynthesis via salvage pathway; L-methionine from S-methyl-5-thio-alpha-D-ribose 1-phosphate: step 5/6. Catalyzes 2 different reactions between oxygen and the acireductone 1,2-dihydroxy-3-keto-5-methylthiopentene (DHK-MTPene) depending upon the metal bound in the active site. Fe-containing acireductone dioxygenase (Fe-ARD) produces formate and 2-keto-4-methylthiobutyrate (KMTB), the alpha-ketoacid precursor of methionine in the methionine recycle pathway. Ni-containing acireductone dioxygenase (Ni-ARD) produces methylthiopropionate, carbon monoxide and formate, and does not lie on the methionine recycle pathway. The protein is Acireductone dioxygenase of Cryptococcus neoformans var. neoformans serotype D (strain JEC21 / ATCC MYA-565) (Filobasidiella neoformans).